A 282-amino-acid polypeptide reads, in one-letter code: tRNA (guanine-N(1)-)-methyltransferase (282 aa).

Residue 145–150 (IGDYVL) participates in S-adenosyl-L-methionine binding.

This sequence belongs to the RNA methyltransferase TrmD family. Homodimer.

It localises to the cytoplasm. The catalysed reaction is guanosine(37) in tRNA + S-adenosyl-L-methionine = N(1)-methylguanosine(37) in tRNA + S-adenosyl-L-homocysteine + H(+). Functionally, specifically methylates guanosine-37 in various tRNAs. The protein is tRNA (guanine-N(1)-)-methyltransferase of Streptomyces avermitilis (strain ATCC 31267 / DSM 46492 / JCM 5070 / NBRC 14893 / NCIMB 12804 / NRRL 8165 / MA-4680).